The primary structure comprises 52 residues: Venom peptide 4a (52 aa).

The first 23 residues, 1 to 23, serve as a signal peptide directing secretion; the sequence is MRSAILLVIVAIVAILGFLGVNA. AXPX repeat units lie at residues 23-26, 31-34, and 39-42; these read AEPL, AEPN, and AAPL. A propeptide spanning residues 24–41 is cleaved from the precursor; the sequence is EPLPSPLAEPNPHAKAAP. An Alanine amide modification is found at A51.

In terms of tissue distribution, expressed by the venom gland.

The protein localises to the secreted. The sequence is that of Venom peptide 4a from Eumenes pomiformis (Potter wasp).